The sequence spans 124 residues: UPF0102 protein TM1040_0449 (124 aa).

Belongs to the UPF0102 family.

This chain is UPF0102 protein TM1040_0449, found in Ruegeria sp. (strain TM1040) (Silicibacter sp.).